The primary structure comprises 303 residues: Diaminopimelate epimerase (303 aa).

Residues Asn-15, Gln-47, and Asn-67 each contribute to the substrate site. Cys-76 acts as the Proton donor in catalysis. Residues 77–78 (GN), Asn-163, Asn-197, and 215–216 (ER) each bind substrate. Cys-224 (proton acceptor) is an active-site residue. 225–226 (GS) provides a ligand contact to substrate. The interval 279–303 (DPATGEWSRDTQGLQGSGNADRGTA) is disordered.

This sequence belongs to the diaminopimelate epimerase family. Homodimer.

It is found in the cytoplasm. It catalyses the reaction (2S,6S)-2,6-diaminopimelate = meso-2,6-diaminopimelate. It functions in the pathway amino-acid biosynthesis; L-lysine biosynthesis via DAP pathway; DL-2,6-diaminopimelate from LL-2,6-diaminopimelate: step 1/1. In terms of biological role, catalyzes the stereoinversion of LL-2,6-diaminopimelate (L,L-DAP) to meso-diaminopimelate (meso-DAP), a precursor of L-lysine and an essential component of the bacterial peptidoglycan. This chain is Diaminopimelate epimerase, found in Brucella canis (strain ATCC 23365 / NCTC 10854 / RM-666).